Consider the following 1328-residue polypeptide: 5'-3' exoribonuclease 1 (1328 aa).

A disordered region spans residues 1211-1328; it reads AGKNRKTNVS…VQPMGKLQIN (118 aa). Residues 1217 to 1231 are compositionally biased toward polar residues; the sequence is TNVSANNVSQGTDSR. Positions 1275–1286 are enriched in basic residues; the sequence is HKSKSKFSKGNH.

Belongs to the 5'-3' exonuclease family. In terms of assembly, monomer. Mg(2+) serves as cofactor.

The protein localises to the cytoplasm. It is found in the perinuclear region. It localises to the P-body. Its activity is regulated as follows. Strand exchange activity is enhanced by fatty acid synthase (stimulatory factor P190/210). Functionally, multifunctional protein that exhibits several independent functions at different levels of the cellular processes. 5'-3' exonuclease component of the nonsense-mediated mRNA decay (NMD) which is a highly conserved mRNA degradation pathway, an RNA surveillance system whose role is to identify and rid cells of mRNA with premature termination codons and thus prevents accumulation of potentially harmful truncated proteins. Involved in the degradation of several hypomodified mature tRNA species and participates in the 5'-processing or the degradation of the snoRNA precursors and rRNA processing. The protein is 5'-3' exoribonuclease 1 (exo2) of Schizosaccharomyces pombe (strain 972 / ATCC 24843) (Fission yeast).